A 429-amino-acid chain; its full sequence is Isocitrate dehydrogenase [NADP] (429 aa).

NADP(+) is bound at residue Thr-108. D-threo-isocitrate contacts are provided by Ser-117, Asn-119, Arg-123, Arg-133, and Arg-156. Asp-308 lines the Mg(2+) pocket. NADP(+) is bound by residues His-340 to Tyr-346, Asn-353, Tyr-393, and Arg-397.

The protein belongs to the isocitrate and isopropylmalate dehydrogenases family. In terms of assembly, homodimer. It depends on Mg(2+) as a cofactor. Mn(2+) is required as a cofactor.

It catalyses the reaction D-threo-isocitrate + NADP(+) = 2-oxoglutarate + CO2 + NADPH. Its function is as follows. Catalyzes the oxidative decarboxylation of isocitrate to 2-oxoglutarate and carbon dioxide with the concomitant reduction of NADP(+). This is Isocitrate dehydrogenase [NADP] (icd) from Caldococcus noboribetus.